Reading from the N-terminus, the 308-residue chain is D-alanine--D-alanine ligase (308 aa).

The ATP-grasp domain maps to 105 to 302 (KAIFRSLGLA…FPDLCERILD (198 aa)). 133-188 (DLPFGLPCVVKPAGEGSSVGVHLVNEAAELGPACRDAASHAGDVIVERYVKGTEVD) serves as a coordination point for ATP. 3 residues coordinate Mg(2+): Asp-256, Glu-269, and Asn-271.

The protein belongs to the D-alanine--D-alanine ligase family. Mg(2+) is required as a cofactor. It depends on Mn(2+) as a cofactor.

The protein localises to the cytoplasm. It carries out the reaction 2 D-alanine + ATP = D-alanyl-D-alanine + ADP + phosphate + H(+). It participates in cell wall biogenesis; peptidoglycan biosynthesis. Cell wall formation. This Anaeromyxobacter dehalogenans (strain 2CP-1 / ATCC BAA-258) protein is D-alanine--D-alanine ligase.